The chain runs to 400 residues: Forkhead box protein A4-B (400 aa).

Positions 119 to 213 (KPPYSYISLI…ENGCYLRRQK (95 aa)) form a DNA-binding region, fork-head. Basic and acidic residues predominate over residues 218 to 234 (ERSKSGEGERKGNKPGD). Residues 218-290 (ERSKSGEGER…VGFSPTSEQA (73 aa)) form a disordered region. 2 stretches are compositionally biased toward polar residues: residues 249–258 (DCSSSRSPQA) and 267–277 (STGSSIHQATG).

In terms of tissue distribution, primarily expressed in the dorsal blastopore lip (Spemann organizer) of early gastrulae. At later stages, expressed in the dorsal mesoderm and the neural floor plate. In the dorsal mesoderm, expressed in the notochord but not in the presomitic mesoderm. Also expressed in the mid-brain area.

The protein resides in the nucleus. Its function is as follows. Transcriptional repressor involved in embryonic nervous system development. Plays a role in the induction and patterning of the anterior-posterior neural axis. Involved in the establishment of floor plate differentiation from neural plate cells during gastrulation. Binds the anf1 promoter sequence to restrict expression of anf1 to the anterior of the neural plate, thereby patterning the forebrain. Can bind to the HNF-3-alpha DNA target sequence. Cooperates with t/bra in a dose-dependent manner to specify dorsal mesoderm formation, including notochord. May be involved in the dorso-ventral patterning of the mesoderm. Binds to DNA via the target sequence 5'-[GA]TAAA[TC]A-3', with 5'-GTAAATA-3' being the preferred binding site. The polypeptide is Forkhead box protein A4-B (foxa4-b) (Xenopus laevis (African clawed frog)).